A 37-amino-acid chain; its full sequence is Islet amyloid polypeptide (37 aa).

The cysteines at positions 2 and 7 are disulfide-linked. Y37 carries the post-translational modification Tyrosine amide.

The protein belongs to the calcitonin family. As to quaternary structure, can form homodimers. Interacts with IDE and INS. Interaction with INS inhibits homodimerization and fibril formation.

Its subcellular location is the secreted. Its function is as follows. Amylin/IAPP is a glucoregulatory peptide hormone that plays an important role in the regulation of energy homeostasis. Selectively inhibits insulin-stimulated glucose utilization and glycogen deposition in muscle, while not affecting adipocyte glucose metabolism. IAPP function is mediated by the CALCR-RAMPs (AMYRs) receptor complexes. Amylin can also bind CALCR receptor in the absence of RAMPs, although it is more selective for AMYRs. The chain is Islet amyloid polypeptide (IAPP) from Cricetulus griseus (Chinese hamster).